The primary structure comprises 669 residues: UvrABC system protein C (669 aa).

In terms of domain architecture, GIY-YIG spans 14–91 (DSPGCYLHKD…IQRYKPKYNI (78 aa)). Residues 196–231 (KKIVKELEGKMISASDNMEFEQAAEYRDVIKAIGTL) form the UVR domain. Residues 647 to 669 (PHKSDENWESIKDNVPLLKSEKS) form a disordered region. Over residues 648-658 (HKSDENWESIK) the composition is skewed to basic and acidic residues.

The protein belongs to the UvrC family. As to quaternary structure, interacts with UvrB in an incision complex.

Its subcellular location is the cytoplasm. Functionally, the UvrABC repair system catalyzes the recognition and processing of DNA lesions. UvrC both incises the 5' and 3' sides of the lesion. The N-terminal half is responsible for the 3' incision and the C-terminal half is responsible for the 5' incision. In Lactococcus lactis subsp. cremoris (strain MG1363), this protein is UvrABC system protein C.